We begin with the raw amino-acid sequence, 111 residues long: Small ribosomal subunit protein bS16 (111 aa).

It belongs to the bacterial ribosomal protein bS16 family.

In Rickettsia africae (strain ESF-5), this protein is Small ribosomal subunit protein bS16.